Here is a 236-residue protein sequence, read N- to C-terminus: MNDSNDTSVAGGAAGADSRVLSADSALTERQRTILDVIRASVTSRGYPPSIREIGDAVGLTSTSSVAHQLRTLERKGYLRRDPNRPRAVNVRGADDAALPPVTEVAGSDALPEPTFVPVLGRIAAGGPILAEEAVEDVFPLPRELVGEGTLFLLKVIGDSMVEAAICDGDWVVVRQQNVADNGDIVAAMIDGEATVKTFKRAGGQVWLMPHNPAFDPIPGNDATVLGKVVTVIRKV.

A disordered region spans residues 1–25 (MNDSNDTSVAGGAAGADSRVLSADS). Residues 51–71 (IREIGDAVGLTSTSSVAHQLR) constitute a DNA-binding region (H-T-H motif). Residues Ser-160 and Lys-197 each act as for autocatalytic cleavage activity in the active site.

It belongs to the peptidase S24 family. Homodimer.

It carries out the reaction Hydrolysis of Ala-|-Gly bond in repressor LexA.. In terms of biological role, represses a number of genes involved in the response to DNA damage (SOS response), including recA and lexA. In the presence of single-stranded DNA, RecA interacts with LexA causing an autocatalytic cleavage which disrupts the DNA-binding part of LexA, leading to derepression of the SOS regulon and eventually DNA repair. This is LexA repressor from Mycobacterium tuberculosis (strain ATCC 25177 / H37Ra).